Consider the following 173-residue polypeptide: Translation initiation factor IF-3 (173 aa).

It belongs to the IF-3 family. As to quaternary structure, monomer.

The protein localises to the cytoplasm. In terms of biological role, IF-3 binds to the 30S ribosomal subunit and shifts the equilibrium between 70S ribosomes and their 50S and 30S subunits in favor of the free subunits, thus enhancing the availability of 30S subunits on which protein synthesis initiation begins. In Caulobacter sp. (strain K31), this protein is Translation initiation factor IF-3.